A 316-amino-acid polypeptide reads, in one-letter code: Pantothenate kinase (316 aa).

95-102 (GSVAVGKS) is a binding site for ATP.

This sequence belongs to the prokaryotic pantothenate kinase family.

Its subcellular location is the cytoplasm. The enzyme catalyses (R)-pantothenate + ATP = (R)-4'-phosphopantothenate + ADP + H(+). Its pathway is cofactor biosynthesis; coenzyme A biosynthesis; CoA from (R)-pantothenate: step 1/5. This chain is Pantothenate kinase, found in Shewanella oneidensis (strain ATCC 700550 / JCM 31522 / CIP 106686 / LMG 19005 / NCIMB 14063 / MR-1).